The sequence spans 330 residues: uncharacterized protein (330 aa).

This is an uncharacterized protein from Acanthamoeba polyphaga (Amoeba).